Consider the following 376-residue polypeptide: DnaJ homolog subfamily B member 12 (376 aa).

Met1 is modified (N-acetylmethionine). The disordered stretch occupies residues 45 to 97 (ALIESLNQKPQSTGDHPQPTDTTHTTTKKAGGTETPSANGEAGGGESAKGYTS). The segment covering 57-84 (TGDHPQPTDTTHTTTKKAGGTETPSANG) has biased composition (low complexity). Positions 111–175 (DYYEILGVSR…EKRKQYDQFG (65 aa)) constitute a J domain. Pros-methylhistidine is present on His186. The chain crosses the membrane as a helical span at residues 243–263 (GGLGVFVQLMPILILILVSAL).

The protein belongs to the DnaJ family. DNAJB12/DNAJB14 subfamily. In terms of assembly, homodimer and homotetramer. Interacts (via J domain) with HSPA8/Hsc70. Forms a multiprotein complex, at least composed of DNAJB12, DNAJB14, HSPA8/Hsc70 and SGTA; interaction with DNAJB14 and HSPA8/Hsc70 is direct. Post-translationally, methylated at His-186 by METTL9.

The protein localises to the endoplasmic reticulum membrane. The protein resides in the nucleus membrane. Acts as a co-chaperone with HSPA8/Hsc70; required to promote protein folding and trafficking, prevent aggregation of client proteins, and promote unfolded proteins to endoplasmic reticulum-associated degradation (ERAD) pathway. Acts by determining HSPA8/Hsc70's ATPase and polypeptide-binding activities. Can also act independently of HSPA8/Hsc70: together with DNAJB14, acts as a chaperone that promotes maturation of potassium channels KCND2 and KCNH2 by stabilizing nascent channel subunits and assembling them into tetramers. While stabilization of nascent channel proteins is dependent on HSPA8/Hsc70, the process of oligomerization of channel subunits is independent of HSPA8/Hsc70. When overexpressed, forms membranous structures together with DNAJB14 and HSPA8/Hsc70 within the nucleus; the role of these structures, named DJANGOs, is still unclear. This Mus musculus (Mouse) protein is DnaJ homolog subfamily B member 12.